A 394-amino-acid polypeptide reads, in one-letter code: Flap endonuclease 1-A (394 aa).

The interval 1–105 is N-domain; that stretch reads MGIKGLTGLL…GVLSKRLERR (105 aa). Residue Asp34 coordinates Mg(2+). DNA is bound by residues Arg47 and Arg71. Positions 87, 159, 161, 180, and 182 each coordinate Mg(2+). The segment at 123–254 is I-domain; that stretch reads DVDRFSRRTV…KSALKLIREY (132 aa). Glu159 serves as a coordination point for DNA. DNA is bound by residues Gly232 and Asp234. Asp234 serves as a coordination point for Mg(2+). The tract at residues 341–349 is interaction with PCNA; sequence QQGRLDGFF. Residues 356–375 form a disordered region; the sequence is KAAAPAPVGKAKGKGKVDAK.

Belongs to the XPG/RAD2 endonuclease family. FEN1 subfamily. In terms of assembly, interacts with PCNA. Three molecules of FEN1 bind to one PCNA trimer with each molecule binding to one PCNA monomer. PCNA stimulates the nuclease activity without altering cleavage specificity. It depends on Mg(2+) as a cofactor. In terms of processing, phosphorylated. Phosphorylation upon DNA damage induces relocalization to the nuclear plasma.

The protein resides in the nucleus. It is found in the nucleolus. It localises to the nucleoplasm. The protein localises to the mitochondrion. Functionally, structure-specific nuclease with 5'-flap endonuclease and 5'-3' exonuclease activities involved in DNA replication and repair. During DNA replication, cleaves the 5'-overhanging flap structure that is generated by displacement synthesis when DNA polymerase encounters the 5'-end of a downstream Okazaki fragment. It enters the flap from the 5'-end and then tracks to cleave the flap base, leaving a nick for ligation. Also involved in the long patch base excision repair (LP-BER) pathway, by cleaving within the apurinic/apyrimidinic (AP) site-terminated flap. Acts as a genome stabilization factor that prevents flaps from equilibrating into structures that lead to duplications and deletions. Also possesses 5'-3' exonuclease activity on nicked or gapped double-stranded DNA, and exhibits RNase H activity. Also involved in replication and repair of rDNA and in repairing mitochondrial DNA. The polypeptide is Flap endonuclease 1-A (Laccaria bicolor (strain S238N-H82 / ATCC MYA-4686) (Bicoloured deceiver)).